The chain runs to 200 residues: Glycerol-3-phosphate acyltransferase (200 aa).

The next 4 membrane-spanning stretches (helical) occupy residues 1–21 (MITVVLIFSAYLLGSISFAVV), 84–104 (VIAGAALAVFLGHLFPIFLAF), 116–136 (ILLGLNPWLGVLTISTWMVVA), and 159–179 (FLLEKGILIMAVSIISVLLIL).

Belongs to the PlsY family. As to quaternary structure, probably interacts with PlsX.

The protein localises to the cell inner membrane. It catalyses the reaction an acyl phosphate + sn-glycerol 3-phosphate = a 1-acyl-sn-glycero-3-phosphate + phosphate. Its pathway is lipid metabolism; phospholipid metabolism. Its function is as follows. Catalyzes the transfer of an acyl group from acyl-phosphate (acyl-PO(4)) to glycerol-3-phosphate (G3P) to form lysophosphatidic acid (LPA). This enzyme utilizes acyl-phosphate as fatty acyl donor, but not acyl-CoA or acyl-ACP. The polypeptide is Glycerol-3-phosphate acyltransferase (Nitrosomonas europaea (strain ATCC 19718 / CIP 103999 / KCTC 2705 / NBRC 14298)).